A 162-amino-acid polypeptide reads, in one-letter code: Protein FAM162B (162 aa).

Residues 26-69 (EATRRPAPALPPRGLPCYSSGGAPSNSGPQGHGEIHRVPTQRRP) form a disordered region. Residues 107 to 127 (VKACYIMIGLTIIACFAVIVS) form a helical membrane-spanning segment.

It belongs to the UPF0389 family.

The protein resides in the membrane. In Homo sapiens (Human), this protein is Protein FAM162B (FAM162B).